Consider the following 464-residue polypeptide: ATP-dependent protease ATPase subunit HslU (464 aa).

Residues V18, 60–65, D277, E342, and R414 contribute to the ATP site; that span reads GVGKTE.

It belongs to the ClpX chaperone family. HslU subfamily. A double ring-shaped homohexamer of HslV is capped on each side by a ring-shaped HslU homohexamer. The assembly of the HslU/HslV complex is dependent on binding of ATP.

The protein localises to the cytoplasm. ATPase subunit of a proteasome-like degradation complex; this subunit has chaperone activity. The binding of ATP and its subsequent hydrolysis by HslU are essential for unfolding of protein substrates subsequently hydrolyzed by HslV. HslU recognizes the N-terminal part of its protein substrates and unfolds these before they are guided to HslV for hydrolysis. In Lactobacillus delbrueckii subsp. bulgaricus (strain ATCC 11842 / DSM 20081 / BCRC 10696 / JCM 1002 / NBRC 13953 / NCIMB 11778 / NCTC 12712 / WDCM 00102 / Lb 14), this protein is ATP-dependent protease ATPase subunit HslU.